The chain runs to 137 residues: Peptide methionine sulfoxide reductase MsrB (137 aa).

The 123-residue stretch at 7–129 (PDHPATELNE…NSASLSFTDG (123 aa)) folds into the MsrB domain. Zn(2+) is bound by residues Cys-46, Cys-49, Cys-95, and Cys-98. Catalysis depends on Cys-118, which acts as the Nucleophile.

This sequence belongs to the MsrB Met sulfoxide reductase family. Zn(2+) serves as cofactor.

The enzyme catalyses L-methionyl-[protein] + [thioredoxin]-disulfide + H2O = L-methionyl-(R)-S-oxide-[protein] + [thioredoxin]-dithiol. In Serratia proteamaculans (strain 568), this protein is Peptide methionine sulfoxide reductase MsrB.